Consider the following 301-residue polypeptide: tRNA pseudouridine synthase B (301 aa).

Asp-38 serves as the catalytic Nucleophile.

This sequence belongs to the pseudouridine synthase TruB family. Type 1 subfamily.

The catalysed reaction is uridine(55) in tRNA = pseudouridine(55) in tRNA. Functionally, responsible for synthesis of pseudouridine from uracil-55 in the psi GC loop of transfer RNAs. This Ehrlichia canis (strain Jake) protein is tRNA pseudouridine synthase B.